The sequence spans 261 residues: Ribosomal RNA small subunit methyltransferase J (261 aa).

Residues 109-110 (RD), 125-126 (ER), and Asp-179 each bind S-adenosyl-L-methionine.

The protein belongs to the methyltransferase superfamily. RsmJ family.

The protein resides in the cytoplasm. It catalyses the reaction guanosine(1516) in 16S rRNA + S-adenosyl-L-methionine = N(2)-methylguanosine(1516) in 16S rRNA + S-adenosyl-L-homocysteine + H(+). Functionally, specifically methylates the guanosine in position 1516 of 16S rRNA. This is Ribosomal RNA small subunit methyltransferase J from Pseudomonas aeruginosa (strain LESB58).